The following is a 706-amino-acid chain: Ribosomal RNA large subunit methyltransferase K/L (706 aa).

The 112-residue stretch at 43 to 154 (LMYQSLLWSR…RDMASVALDL (112 aa)) folds into the THUMP domain.

It belongs to the methyltransferase superfamily. RlmKL family.

It is found in the cytoplasm. It catalyses the reaction guanosine(2445) in 23S rRNA + S-adenosyl-L-methionine = N(2)-methylguanosine(2445) in 23S rRNA + S-adenosyl-L-homocysteine + H(+). The enzyme catalyses guanosine(2069) in 23S rRNA + S-adenosyl-L-methionine = N(2)-methylguanosine(2069) in 23S rRNA + S-adenosyl-L-homocysteine + H(+). Specifically methylates the guanine in position 2445 (m2G2445) and the guanine in position 2069 (m7G2069) of 23S rRNA. The sequence is that of Ribosomal RNA large subunit methyltransferase K/L from Yersinia pseudotuberculosis serotype O:1b (strain IP 31758).